The chain runs to 154 residues: NADPH-dependent 7-cyano-7-deazaguanine reductase (154 aa).

The active-site Thioimide intermediate is the Cys-52. Asp-59 acts as the Proton donor in catalysis. Residues Val-74–Ser-76 and His-93–Glu-94 each bind substrate.

Belongs to the GTP cyclohydrolase I family. QueF type 1 subfamily.

The protein localises to the cytoplasm. The enzyme catalyses 7-aminomethyl-7-carbaguanine + 2 NADP(+) = 7-cyano-7-deazaguanine + 2 NADPH + 3 H(+). It functions in the pathway tRNA modification; tRNA-queuosine biosynthesis. Functionally, catalyzes the NADPH-dependent reduction of 7-cyano-7-deazaguanine (preQ0) to 7-aminomethyl-7-deazaguanine (preQ1). In Sinorhizobium medicae (strain WSM419) (Ensifer medicae), this protein is NADPH-dependent 7-cyano-7-deazaguanine reductase.